Consider the following 1104-residue polypeptide: Partner and localizer of BRCA2 (1104 aa).

Positions 1–157 are required for its oligomerization and is important for its focal concentration at DNA damage sites; that stretch reads MEELSGKPLS…WEKSSVSQEK (157 aa). Positions 1–195 are interaction with RAD51; the sequence is MEELSGKPLS…TPVSEKTHLL (195 aa). The interaction with BRCA1 stretch occupies residues 1 to 308; it reads MEELSGKPLS…RAHGQLPGSP (308 aa). Residues 9-48 adopt a coiled-coil conformation; the sequence is LSYAEKEKLKEKLAFLKKEYSRTLARLQRAKRAEKAKNSK. Basic and acidic residues predominate over residues 39 to 52; that stretch reads KRAEKAKNSKKAIE. Disordered regions lie at residues 39 to 91, 122 to 157, and 243 to 272; these read KRAE…TGEN, GQLL…SQEK, and PSCT…TQGP. 2 stretches are compositionally biased toward polar residues: residues 59 to 70 and 138 to 154; these read EASSQLSHSESI and NTLP…SSVS. Serine 274 is modified (phosphoserine). Positions 304 to 354 are disordered; it reads LPGSPNSCSVNDLTHSNLPANSTPNSKSLKSPSNTVDERNEPLQEDEILGP. The span at 306–338 shows a compositional bias: polar residues; that stretch reads GSPNSCSVNDLTHSNLPANSTPNSKSLKSPSNT. Residue serine 364 is modified to Phosphoserine. The interval 374–424 is chAM (Chromatin-association motif); required for chromatin association, mediates nucleosome association; that stretch reads SCTMLEGLLFPAEYYVRTTRRMSDCQRKIALEAVIQSHLGVKKKELKKKTK. 2 disordered regions span residues 417 to 494 and 581 to 730; these read KELK…SART and LQRD…TPLP. A Phosphoserine modification is found at serine 432. Positions 446 to 462 are enriched in low complexity; it reads TSTGQSSSGSLSQKLLS. Residues 483 to 492 show a composition bias toward basic residues; sequence RGHRGKRKSA. Positions 664-713 are enriched in polar residues; sequence TLSTEAAQPCSTSQPPLLGDTNSLVNNSKQCNSSACSPKPDTNLQASGRQ. The segment at 693-1104 is required for interaction with POLH and POLH DNA synthesis stimulation; the sequence is QCNSSACSPK…DGNIFIYRYF (412 aa). Residues 771–1104 are interaction with RAD51 and BRCA2; it reads GNLQLVSELK…DGNIFIYRYF (334 aa). Positions 771 to 1104 are interaction with RAD51, BRCA2 and POLH; sequence GNLQLVSELK…DGNIFIYRYF (334 aa). 7 WD repeats span residues 772 to 833, 835 to 879, 880 to 927, 928 to 970, 976 to 1027, 1033 to 1071, and 1073 to 1104; these read NLQL…WHFT, VPVL…QVLL, KSGD…LMPP, DETV…MHID, SVCH…LLCS, AGRF…LLPP, and SDQS…YRYF.

Homooligomer; dissociated upon DNA damage thus allowing association with BRCA1. Oligomerization is essential for its focal accumulation at DNA breaks. Part of a BRCA complex containing BRCA1, BRCA2 and PALB2. Interacts with BRCA1 and this interaction is essential for its function in HRR. Interacts with RAD51AP1 and MORF4L1/MRG15. Component of the homologous recombination repair (HR) complex composed of ERCC5/XPG, BRCA2, PALB2, DSS1 and RAD51. Within the complex, interacts with ERCC5/XPG and BRCA2. Interacts with BRCA2, RAD51C, RAD51 and XRCC3; the interactions are direct and it may serve as a scaffold for a HR complex containing PALB2, BRCA2, RAD51C, RAD51 and XRCC3. Interacts with POLH; the interaction is direct.

The protein localises to the nucleus. Functionally, plays a critical role in homologous recombination repair (HRR) through its ability to recruit BRCA2 and RAD51 to DNA breaks. Strongly stimulates the DNA strand-invasion activity of RAD51, stabilizes the nucleoprotein filament against a disruptive BRC3-BRC4 polypeptide and helps RAD51 to overcome the suppressive effect of replication protein A (RPA). Functionally cooperates with RAD51AP1 in promoting of D-loop formation by RAD51. Serves as the molecular scaffold in the formation of the BRCA1-PALB2-BRCA2 complex which is essential for homologous recombination. Via its WD repeats is proposed to scaffold a HR complex containing RAD51C and BRCA2 which is thought to play a role in HR-mediated DNA repair. Essential partner of BRCA2 that promotes the localization and stability of BRCA2. Also enables its recombinational repair and checkpoint functions of BRCA2. May act by promoting stable association of BRCA2 with nuclear structures, allowing BRCA2 to escape the effects of proteasome-mediated degradation. Binds DNA with high affinity for D loop, which comprises single-stranded, double-stranded and branched DNA structures. May play a role in the extension step after strand invasion at replication-dependent DNA double-strand breaks; together with BRCA2 is involved in both POLH localization at collapsed replication forks and DNA polymerization activity. This Mus musculus (Mouse) protein is Partner and localizer of BRCA2 (Palb2).